A 523-amino-acid polypeptide reads, in one-letter code: Jerky protein homolog-like (523 aa).

One can recognise an HTH psq-type domain in the interval 1–52; it reads MSGKRKRVVLTIKDKLDIIKKLEDGGSSKQLAVIYGIGETTVRDIRKNKEKI. DNA-binding regions (H-T-H motif) lie at residues 28–48 and 100–132; these read SKQL…IRKN and PICA…FKQR. In terms of domain architecture, HTH CENPB-type spans 67 to 139; the sequence is KRKSMKPSMY…KQRHSIREIN (73 aa). The region spanning 168-385 is the DDE-1 domain; sequence LQPEQIYNAD…VKPVTISRAW (218 aa).

It belongs to the tigger transposable element derived protein family.

Its subcellular location is the nucleus. The sequence is that of Jerky protein homolog-like (Jrkl) from Mus musculus (Mouse).